We begin with the raw amino-acid sequence, 201 residues long: Holliday junction branch migration complex subunit RuvA (201 aa).

The tract at residues 1-64 (MYEYIRGQFQ…EDFIGLYGFT (64 aa)) is domain I. The tract at residues 65–143 (TREELEMFKL…PDELTSEEGE (79 aa)) is domain II. Positions 144–152 (LIEGINDNS) are flexible linker. The segment at 153-201 (DYSFNINETLSALMALGYTEKEAQKALEKVDKTLSIENMIKESLKLLMR) is domain III.

It belongs to the RuvA family. In terms of assembly, homotetramer. Forms an RuvA(8)-RuvB(12)-Holliday junction (HJ) complex. HJ DNA is sandwiched between 2 RuvA tetramers; dsDNA enters through RuvA and exits via RuvB. An RuvB hexamer assembles on each DNA strand where it exits the tetramer. Each RuvB hexamer is contacted by two RuvA subunits (via domain III) on 2 adjacent RuvB subunits; this complex drives branch migration. In the full resolvosome a probable DNA-RuvA(4)-RuvB(12)-RuvC(2) complex forms which resolves the HJ.

The protein localises to the cytoplasm. In terms of biological role, the RuvA-RuvB-RuvC complex processes Holliday junction (HJ) DNA during genetic recombination and DNA repair, while the RuvA-RuvB complex plays an important role in the rescue of blocked DNA replication forks via replication fork reversal (RFR). RuvA specifically binds to HJ cruciform DNA, conferring on it an open structure. The RuvB hexamer acts as an ATP-dependent pump, pulling dsDNA into and through the RuvAB complex. HJ branch migration allows RuvC to scan DNA until it finds its consensus sequence, where it cleaves and resolves the cruciform DNA. The polypeptide is Holliday junction branch migration complex subunit RuvA (Clostridium perfringens (strain ATCC 13124 / DSM 756 / JCM 1290 / NCIMB 6125 / NCTC 8237 / Type A)).